Reading from the N-terminus, the 378-residue chain is 23S rRNA (uracil(747)-C(5))-methyltransferase RlmC (378 aa).

Residues C3, C11, C14, and C87 each contribute to the [4Fe-4S] cluster site. 4 residues coordinate S-adenosyl-L-methionine: Q212, F241, E262, and N309. C336 acts as the Nucleophile in catalysis.

It belongs to the class I-like SAM-binding methyltransferase superfamily. RNA M5U methyltransferase family. RlmC subfamily.

It catalyses the reaction uridine(747) in 23S rRNA + S-adenosyl-L-methionine = 5-methyluridine(747) in 23S rRNA + S-adenosyl-L-homocysteine + H(+). Catalyzes the formation of 5-methyl-uridine at position 747 (m5U747) in 23S rRNA. The chain is 23S rRNA (uracil(747)-C(5))-methyltransferase RlmC from Shewanella halifaxensis (strain HAW-EB4).